The sequence spans 779 residues: Phosphatidylinositol 4-phosphate 5-kinase 4 (779 aa).

The interval 20–61 (QQAKKRANSIFGTVSVAPQTDDDATTTTEENDDETSTNRSSI) is disordered. The span at 39–54 (TDDDATTTTEENDDET) shows a compositional bias: acidic residues. MORN repeat units follow at residues 77-99 (YTGQ…DGCM), 100-122 (YIGD…SGAT), 123-145 (YEGE…SGDT), 146-168 (YKGQ…NGDV), 169-191 (YDGE…DGSY), 192-214 (YMGE…DGNR), 215-237 (YDGF…DGSF), and 238-259 (YVGH…SGDD). Residues 382–775 (TISKGHRNYE…RFRDFIFKVF (394 aa)) form the PIPK domain. Residues 735-756 (YDISKKLEHAYKSIQYDPTSIS) are activation loop.

The enzyme catalyses a 1,2-diacyl-sn-glycero-3-phospho-(1D-myo-inositol 4-phosphate) + ATP = a 1,2-diacyl-sn-glycero-3-phospho-(1D-myo-inositol-4,5-bisphosphate) + ADP + H(+). This chain is Phosphatidylinositol 4-phosphate 5-kinase 4 (PIP5K4), found in Arabidopsis thaliana (Mouse-ear cress).